Consider the following 107-residue polypeptide: Rhodocoxin (107 aa).

Residues 2-106 (PTVTYVHPDG…GLIVRLPEEQ (105 aa)) form the 2Fe-2S ferredoxin-type domain. [2Fe-2S] cluster contacts are provided by Cys-40, Cys-46, Cys-49, and Cys-87.

This sequence belongs to the adrenodoxin/putidaredoxin family. The cofactor is [2Fe-2S] cluster.

Functionally, ferredoxin-type protein which transfers electrons from rhodocoxin reductase to cytochrome CYP116 (ThcB), which is involved in the degradation of thiocarbamate herbicides. The protein is Rhodocoxin (thcC) of Rhodococcus erythropolis (Arthrobacter picolinophilus).